A 520-amino-acid chain; its full sequence is Ribonuclease Y (520 aa).

A helical membrane pass occupies residues 4-24 (TVWILISILLATVGAVVGFFV). The tract at residues 86–116 (KQENRLMQKEENLDRKDETLDKREQQLEKKE) is disordered. The region spanning 210–273 (TVSVVNLPND…ETARIALDKL (64 aa)) is the KH domain. Residues 336-429 (VLKHSMEVAY…VAAADALSAA (94 aa)) form the HD domain.

This sequence belongs to the RNase Y family.

The protein localises to the cell membrane. Endoribonuclease that initiates mRNA decay. The protein is Ribonuclease Y of Bacillus cereus (strain ATCC 10987 / NRS 248).